A 158-amino-acid chain; its full sequence is Large ribosomal subunit protein uL11 (158 aa).

This sequence belongs to the universal ribosomal protein uL11 family. As to quaternary structure, part of the ribosomal stalk of the 50S ribosomal subunit. Interacts with L10 and the large rRNA to form the base of the stalk. L10 forms an elongated spine to which L12 dimers bind in a sequential fashion forming a multimeric L10(L12)X complex.

In terms of biological role, forms part of the ribosomal stalk which helps the ribosome interact with GTP-bound translation factors. The protein is Large ribosomal subunit protein uL11 of Methanocella arvoryzae (strain DSM 22066 / NBRC 105507 / MRE50).